The following is a 573-amino-acid chain: Potassium-transporting ATPase potassium-binding subunit (573 aa).

10 helical membrane passes run 6–26 (ILFALFIVTIALITKPLGSYI), 66–86 (FFSLVSFSVMAFIFVLVILLL), 135–155 (ALAVQNFVSAAVGLCVAIALI), 177–197 (VFWILLPISIVIAIVYIFQGV), 257–277 (IQMVSIFAIAAALTYTFGKWV), 283–303 (GWLIFGVMLVLFIISLVVMTI), 382–402 (IFGGVGAGFYGFFMFLMLAVF), 428–448 (MFALLISPCCVLVFTGLAAVI), 493–513 (ITIALSMLIGRFGVIFAVIML), and 537–557 (FIFAILVFFTILLIGGLTIFP).

Belongs to the KdpA family. As to quaternary structure, the system is composed of three essential subunits: KdpA, KdpB and KdpC.

The protein resides in the cell inner membrane. Part of the high-affinity ATP-driven potassium transport (or Kdp) system, which catalyzes the hydrolysis of ATP coupled with the electrogenic transport of potassium into the cytoplasm. This subunit binds the periplasmic potassium ions and delivers the ions to the membrane domain of KdpB through an intramembrane tunnel. This Francisella tularensis subsp. mediasiatica (strain FSC147) protein is Potassium-transporting ATPase potassium-binding subunit.